Reading from the N-terminus, the 21-residue chain is Cutinase 2 (21 aa).

Belongs to the cutinase family.

The protein localises to the secreted. The enzyme catalyses cutin + H2O = cutin monomers.. With respect to regulation, inhibited by diisopropyl fluorophosphate (DFP). Functionally, catalyzes the hydrolysis of complex carboxylic polyesters found in the cell wall of plants. Degrades cutin, a macromolecule that forms the structure of the plant cuticle. Allows pathogenic fungi to penetrate through the cuticular barrier into the host plant during the initial stage of fungal infection. This Colletotrichum gloeosporioides (Anthracnose fungus) protein is Cutinase 2.